The chain runs to 366 residues: Peptide chain release factor 2 (366 aa).

An N5-methylglutamine modification is found at Q251.

Belongs to the prokaryotic/mitochondrial release factor family. Post-translationally, methylated by PrmC. Methylation increases the termination efficiency of RF2.

Its subcellular location is the cytoplasm. Its function is as follows. Peptide chain release factor 2 directs the termination of translation in response to the peptide chain termination codons UGA and UAA. This Listeria monocytogenes serovar 1/2a (strain ATCC BAA-679 / EGD-e) protein is Peptide chain release factor 2 (prfB).